A 1392-amino-acid polypeptide reads, in one-letter code: L-2-aminoadipate reductase (1392 aa).

Lys-541 participates in a covalent cross-link: Glycyl lysine isopeptide (Lys-Gly) (interchain with G-Cter in ubiquitin). The Carrier domain occupies 843–920 (SQFTNVEREV…AFAAEIDRIK (78 aa)). At Ser-880 the chain carries O-(pantetheine 4'-phosphoryl)serine. Lys-1276 participates in a covalent cross-link: Glycyl lysine isopeptide (Lys-Gly) (interchain with G-Cter in ubiquitin).

The protein belongs to the ATP-dependent AMP-binding enzyme family. It depends on pantetheine 4'-phosphate as a cofactor.

It carries out the reaction (S)-2-amino-6-oxohexanoate + NADP(+) + H2O = L-2-aminoadipate + NADPH + 2 H(+). It catalyses the reaction (S)-2-amino-6-oxohexanoate + NAD(+) + H2O = L-2-aminoadipate + NADH + 2 H(+). The enzyme catalyses (S)-2-amino-6-oxohexanoate + AMP + diphosphate + NADP(+) = L-2-aminoadipate + ATP + NADPH + H(+). The protein operates within amino-acid biosynthesis; L-lysine biosynthesis via AAA pathway; L-lysine from L-alpha-aminoadipate (fungal route): step 1/3. In terms of biological role, catalyzes the activation of alpha-aminoadipate by ATP-dependent adenylation and the reduction of activated alpha-aminoadipate by NADPH. The activated alpha-aminoadipate is bound to the phosphopantheinyl group of the enzyme itself before it is reduced to (S)-2-amino-6-oxohexanoate. This chain is L-2-aminoadipate reductase (LYS2), found in Saccharomyces cerevisiae (strain ATCC 204508 / S288c) (Baker's yeast).